The following is a 1587-amino-acid chain: Mediator of RNA polymerase II transcription subunit 23 (1587 aa).

Disordered regions lie at residues 1374-1484 (SQSE…QLQH) and 1567-1587 (QHQQ…QQPH). The segment covering 1385 to 1404 (PPEKEKSPEKEKEQEQEQHV) has biased composition (basic and acidic residues). Residues 1387–1404 (EKEKSPEKEKEQEQEQHV) form an acidic region. Residues 1410–1426 (LESTPSVSSLPQMQHHL) show a composition bias toward polar residues. The span at 1430–1450 (PLLPSHQMMPPPQQHSSSLQH) shows a compositional bias: low complexity. Polar residues predominate over residues 1463-1484 (DTSQHQTIQQQSNHPTQQQLQH). The span at 1567-1576 (QHQQYMQQQQ) shows a compositional bias: low complexity. Basic residues predominate over residues 1577–1587 (QHHHQHQQQPH).

This sequence belongs to the Mediator complex subunit 23 family. In terms of assembly, component of the Mediator complex. Interacts with let-19/mdt-13.

The protein resides in the nucleus. In terms of biological role, component of the Mediator complex, a coactivator involved in regulated gene transcription of nearly all RNA polymerase II-dependent genes. Mediator functions as a bridge to convey information from gene-specific regulatory proteins to the basal RNA polymerase II transcription machinery. Mediator is recruited to promoters by direct interactions with regulatory proteins and serves as a scaffold for the assembly of a functional pre-initiation complex with RNA polymerase II and the general transcription factors. Functions downstream of receptor let-23 and let-60/Ras during vulval induction likely by down-regulating the expression of phosphatase dep-1 and lin-12/Notch in vulva precursor cell descendants with a primary cell fate. Acts to repress beta-catenin target genes. Required for asymmetric division of T-cells. Plays a role in responses to M.nematophilum-mediated bacterial infection by promoting tail swelling and preventing constipation. The protein is Mediator of RNA polymerase II transcription subunit 23 (sur-2) of Caenorhabditis elegans.